Reading from the N-terminus, the 250-residue chain is HTH-type transcriptional regulator SarS (250 aa).

2 consecutive DNA-binding regions (H-T-H motif) follow at residues 53–76 and 177–200; these read FKKI…VLVK and LKDL…NLKK.

Belongs to the SarA family.

The protein resides in the cytoplasm. In terms of biological role, transcriptional regulator that controls expression of some virulence factors in a cell density-dependent manner. This Staphylococcus aureus (strain Mu3 / ATCC 700698) protein is HTH-type transcriptional regulator SarS (sarS).